The following is a 429-amino-acid chain: L-threonine dehydratase biosynthetic IlvA (429 aa).

Position 66 is an N6-(pyridoxal phosphate)lysine (Lys-66). Pyridoxal 5'-phosphate contacts are provided by residues Asn-93, 196–200, and Ser-322; that span reads GGGGC. Residues 346 to 420 enclose the ACT-like domain; it reads HYFLVDFPQE…TDIHVEALEP (75 aa).

This sequence belongs to the serine/threonine dehydratase family. In terms of assembly, homotetramer. Requires pyridoxal 5'-phosphate as cofactor.

The enzyme catalyses L-threonine = 2-oxobutanoate + NH4(+). The protein operates within amino-acid biosynthesis; L-isoleucine biosynthesis; 2-oxobutanoate from L-threonine: step 1/1. Its function is as follows. Catalyzes the anaerobic formation of alpha-ketobutyrate and ammonia from threonine in a two-step reaction. The first step involved a dehydration of threonine and a production of enamine intermediates (aminocrotonate), which tautomerizes to its imine form (iminobutyrate). Both intermediates are unstable and short-lived. The second step is the nonenzymatic hydrolysis of the enamine/imine intermediates to form 2-ketobutyrate and free ammonia. In the low water environment of the cell, the second step is accelerated by RidA. The sequence is that of L-threonine dehydratase biosynthetic IlvA (ilvA) from Mycobacterium bovis (strain ATCC BAA-935 / AF2122/97).